A 192-amino-acid polypeptide reads, in one-letter code: MITISETAQAHFVNLLSDQPEGTHIRVFVISPGTAQAECGVSYCPPDAVEADDTELEFNGFNAMVDEKSAPFLEEATIDFVTDQLGSQLTLKAPNAKMRKVSGDAPLVERIEYVIQSEINPQLASHGGNIMLVEITEDGIAVLQFGGGCNGCSMVDVTLKDGIEKQLLDMFPGELTGVKDVTEHQHGDHSYQ.

Cys-149 and Cys-152 together coordinate [4Fe-4S] cluster.

It belongs to the NfuA family. Homodimer. [4Fe-4S] cluster serves as cofactor.

Functionally, involved in iron-sulfur cluster biogenesis. Binds a 4Fe-4S cluster, can transfer this cluster to apoproteins, and thereby intervenes in the maturation of Fe/S proteins. Could also act as a scaffold/chaperone for damaged Fe/S proteins. The chain is Fe/S biogenesis protein NfuA from Shewanella piezotolerans (strain WP3 / JCM 13877).